The chain runs to 582 residues: ATP-dependent lipid A-core flippase (582 aa).

The next 5 membrane-spanning stretches (helical) occupy residues 16–36 (LWPH…ALVI), 69–89 (FIIL…GYCM), 153–173 (IIGL…VLVV), 250–270 (LANP…LYLA), and 275–295 (IKET…FGLL). One can recognise an ABC transmembrane type-1 domain in the interval 29-310 (VAVVALVINA…LTSVTSDFQR (282 aa)). The 237-residue stretch at 342–578 (IKVDNVTFTY…DGAYAQLHRI (237 aa)) folds into the ABC transporter domain. Residue 376-383 (GRSGSGKS) coordinates ATP.

It belongs to the ABC transporter superfamily. Lipid exporter (TC 3.A.1.106) family. As to quaternary structure, homodimer.

It is found in the cell inner membrane. It carries out the reaction ATP + H2O + lipid A-core oligosaccharideSide 1 = ADP + phosphate + lipid A-core oligosaccharideSide 2.. Involved in lipopolysaccharide (LPS) biosynthesis. Translocates lipid A-core from the inner to the outer leaflet of the inner membrane. Transmembrane domains (TMD) form a pore in the inner membrane and the ATP-binding domain (NBD) is responsible for energy generation. This is ATP-dependent lipid A-core flippase from Aliivibrio fischeri (strain ATCC 700601 / ES114) (Vibrio fischeri).